We begin with the raw amino-acid sequence, 149 residues long: MKVIFLQDVKGKGKKGEMKNVADGYAHNFLIKKGLAVEANATNISALKGQKEKEKKEAIAELERAKDLKETLEQLTVELSAKSGEGGRLFGSVTSKQIAEALQKTHKIKVDKRKLELQDGIRTLGYTNVPVKLHPEVQAVLKVHVKEEA.

It belongs to the bacterial ribosomal protein bL9 family.

In terms of biological role, binds to the 23S rRNA. This Bacillus velezensis (strain DSM 23117 / BGSC 10A6 / LMG 26770 / FZB42) (Bacillus amyloliquefaciens subsp. plantarum) protein is Large ribosomal subunit protein bL9.